A 368-amino-acid chain; its full sequence is Uroporphyrinogen decarboxylase (368 aa).

Substrate contacts are provided by residues 41–45 (RQAGR), Asp-91, Tyr-168, Ser-223, and His-345.

Belongs to the uroporphyrinogen decarboxylase family. In terms of assembly, homodimer.

It is found in the cytoplasm. The enzyme catalyses uroporphyrinogen III + 4 H(+) = coproporphyrinogen III + 4 CO2. It functions in the pathway porphyrin-containing compound metabolism; protoporphyrin-IX biosynthesis; coproporphyrinogen-III from 5-aminolevulinate: step 4/4. Its function is as follows. Catalyzes the decarboxylation of four acetate groups of uroporphyrinogen-III to yield coproporphyrinogen-III. The protein is Uroporphyrinogen decarboxylase of Psychrobacter sp. (strain PRwf-1).